Here is a 485-residue protein sequence, read N- to C-terminus: Ribulose bisphosphate carboxylase large chain (485 aa).

Substrate contacts are provided by Asn124 and Thr174. Lys176 (proton acceptor) is an active-site residue. Lys178 serves as a coordination point for substrate. Positions 202, 204, and 205 each coordinate Mg(2+). Lys202 bears the N6-carboxylysine mark. His294 (proton acceptor) is an active-site residue. Residues Arg295, His327, and Ser379 each contribute to the substrate site.

Belongs to the RuBisCO large chain family. Type I subfamily. In terms of assembly, heterohexadecamer of 8 large chains and 8 small chains. Mg(2+) serves as cofactor.

It carries out the reaction 2 (2R)-3-phosphoglycerate + 2 H(+) = D-ribulose 1,5-bisphosphate + CO2 + H2O. The enzyme catalyses D-ribulose 1,5-bisphosphate + O2 = 2-phosphoglycolate + (2R)-3-phosphoglycerate + 2 H(+). Its function is as follows. RuBisCO catalyzes two reactions: the carboxylation of D-ribulose 1,5-bisphosphate, the primary event in carbon dioxide fixation, as well as the oxidative fragmentation of the pentose substrate. Both reactions occur simultaneously and in competition at the same active site. In Rhodopseudomonas palustris (strain BisA53), this protein is Ribulose bisphosphate carboxylase large chain.